The following is a 323-amino-acid chain: tRNA uridine(34) hydroxylase (323 aa).

The Rhodanese domain maps to 123–217; it reads SDPDVVVIDT…YLETIPEEES (95 aa). Catalysis depends on cysteine 177, which acts as the Cysteine persulfide intermediate.

It belongs to the TrhO family.

It carries out the reaction uridine(34) in tRNA + AH2 + O2 = 5-hydroxyuridine(34) in tRNA + A + H2O. Functionally, catalyzes oxygen-dependent 5-hydroxyuridine (ho5U) modification at position 34 in tRNAs. The chain is tRNA uridine(34) hydroxylase from Methylobacillus flagellatus (strain ATCC 51484 / DSM 6875 / VKM B-1610 / KT).